The sequence spans 460 residues: ATP synthase subunit beta (460 aa).

149-156 (GGAGVGKT) contacts ATP.

It belongs to the ATPase alpha/beta chains family. As to quaternary structure, F-type ATPases have 2 components, CF(1) - the catalytic core - and CF(0) - the membrane proton channel. CF(1) has five subunits: alpha(3), beta(3), gamma(1), delta(1), epsilon(1). CF(0) has three main subunits: a(1), b(2) and c(9-12). The alpha and beta chains form an alternating ring which encloses part of the gamma chain. CF(1) is attached to CF(0) by a central stalk formed by the gamma and epsilon chains, while a peripheral stalk is formed by the delta and b chains.

It localises to the cell inner membrane. The catalysed reaction is ATP + H2O + 4 H(+)(in) = ADP + phosphate + 5 H(+)(out). Its function is as follows. Produces ATP from ADP in the presence of a proton gradient across the membrane. The catalytic sites are hosted primarily by the beta subunits. In Nitrosomonas europaea (strain ATCC 19718 / CIP 103999 / KCTC 2705 / NBRC 14298), this protein is ATP synthase subunit beta.